The sequence spans 644 residues: SPbeta prophage-derived uncharacterized protein YomE (644 aa).

In Bacillus subtilis (strain 168), this protein is SPbeta prophage-derived uncharacterized protein YomE (yomE).